The following is a 1324-amino-acid chain: Synaptojanin-1 (1324 aa).

An SAC domain is found at V119 to G442. Residues A475–H859 are catalytic. Phosphoserine is present on residues S820 and S830. An RRM domain is found at S902–P971. Residues L1030–N1324 are disordered. Over residues A1080–L1103 the composition is skewed to polar residues. The span at P1108–S1130 shows a compositional bias: pro residues. Over residues A1138–N1156 the composition is skewed to basic and acidic residues. At R1186 the chain carries Omega-N-methylarginine. T1205 is subject to Phosphothreonine. Residue S1277 is modified to Phosphoserine. A compositionally biased stretch (low complexity) spans S1278–A1292.

The protein belongs to the synaptojanin family. It in the central section; belongs to the inositol 1,4,5-trisphosphate 5-phosphatase family. Interacts with ASH/GRB2. Interacts with PACSIN1, PACSIN2 and PACSIN3. Interacts with AMPH, SH3GL1, SH3GL2 and SH3GL3. Interacts with MYO1E (via SH3 domain). Interacts with BIN1 and DNM1. Interacts with EPS15. As to expression, ubiquitously expressed with highest levels in brain.

It is found in the cytoplasm. It localises to the perinuclear region. The catalysed reaction is a 1,2-diacyl-sn-glycero-3-phospho-(1D-myo-inositol-4,5-bisphosphate) + H2O = a 1,2-diacyl-sn-glycero-3-phospho-(1D-myo-inositol 4-phosphate) + phosphate. In terms of biological role, phosphatase that acts on various phosphoinositides, including phosphatidylinositol 4-phosphate, phosphatidylinositol (4,5)-bisphosphate and phosphatidylinositol (3,4,5)-trisphosphate. Has a role in clathrin-mediated endocytosis. Hydrolyzes PIP2 bound to actin regulatory proteins resulting in the rearrangement of actin filaments downstream of tyrosine kinase and ASH/GRB2. The chain is Synaptojanin-1 (SYNJ1) from Bos taurus (Bovine).